The sequence spans 207 residues: Holliday junction resolvase RecU (207 aa).

Residues 1-21 (MTIRYPNGQVYRQPGPTKSKS) form a disordered region. Mg(2+) is bound by residues Thr-87, Asp-89, Glu-102, and Gln-121.

Belongs to the RecU family. Mg(2+) is required as a cofactor.

Its subcellular location is the cytoplasm. The catalysed reaction is Endonucleolytic cleavage at a junction such as a reciprocal single-stranded crossover between two homologous DNA duplexes (Holliday junction).. Its function is as follows. Endonuclease that resolves Holliday junction intermediates in genetic recombination. Cleaves mobile four-strand junctions by introducing symmetrical nicks in paired strands. Promotes annealing of linear ssDNA with homologous dsDNA. Required for DNA repair, homologous recombination and chromosome segregation. This Lactiplantibacillus plantarum (strain ATCC BAA-793 / NCIMB 8826 / WCFS1) (Lactobacillus plantarum) protein is Holliday junction resolvase RecU.